Consider the following 273-residue polypeptide: Zinc finger protein 32 (273 aa).

C2H2-type zinc fingers lie at residues 77-99 (YECQECGKSFRQKGSLTLHERIH), 105-127 (FECTHCGKSFRAKGNLVTHQRIH), and 133-155 (YQCKECGKSFSQRGSLAVHERLH). Zn(2+) is bound by residues Cys-79, Cys-82, His-95, His-99, Cys-107, Cys-110, His-123, His-127, Ser-141, Gln-144, Gly-157, Tyr-161, Phe-198, Lys-201, Leu-214, Ala-218, Cys-247, Cys-250, His-263, and Cys-267. 2 consecutive C2H2-type zinc fingers follow at residues 161–183 (YECAICQRSFRNQSNLAVHRRVH) and 189–211 (YRCDQCGKAFSQKGSLIVHIRVH). The segment at 217–239 (YACTQCRKSFHTRGNCILHGKIH) adopts a C2H2-type 6 zinc-finger fold. The segment at 245–267 (YLCGQCGKSFTQRGSLAVHQRSC) adopts a CCHC-type zinc-finger fold.

Belongs to the krueppel C2H2-type zinc-finger protein family.

It is found in the nucleus. In terms of biological role, may be involved in transcriptional regulation. The chain is Zinc finger protein 32 (ZNF32) from Homo sapiens (Human).